The chain runs to 217 residues: FGFR1 oncogene partner 2 homolog (217 aa).

2 coiled-coil regions span residues threonine 6 to tyrosine 106 and lysine 163 to serine 188. Residues lysine 194–serine 217 are disordered. Positions glutamate 199–serine 217 are enriched in polar residues.

Belongs to the SIKE family.

It localises to the cytoplasm. In Gallus gallus (Chicken), this protein is FGFR1 oncogene partner 2 homolog (FGFR1OP2).